The sequence spans 336 residues: Protein-glutamate methylesterase/protein-glutamine glutaminase 3 (336 aa).

In terms of domain architecture, Response regulatory spans 2-119; it reads KIAIVNDMPM…PNPKEAAAPL (118 aa). Residue D53 is modified to 4-aspartylphosphate. Positions 147–336 constitute a CheB-type methylesterase domain; it reads PARRDRLVAI…APRLVEVFTQ (190 aa). Active-site residues include S159, H186, and D279.

This sequence belongs to the CheB family. Phosphorylated by CheA. Phosphorylation of the N-terminal regulatory domain activates the methylesterase activity.

It is found in the cytoplasm. It carries out the reaction [protein]-L-glutamate 5-O-methyl ester + H2O = L-glutamyl-[protein] + methanol + H(+). The catalysed reaction is L-glutaminyl-[protein] + H2O = L-glutamyl-[protein] + NH4(+). In terms of biological role, involved in chemotaxis. Part of a chemotaxis signal transduction system that modulates chemotaxis in response to various stimuli. Catalyzes the demethylation of specific methylglutamate residues introduced into the chemoreceptors (methyl-accepting chemotaxis proteins or MCP) by CheR. Also mediates the irreversible deamidation of specific glutamine residues to glutamic acid. This chain is Protein-glutamate methylesterase/protein-glutamine glutaminase 3, found in Pseudomonas savastanoi pv. phaseolicola (strain 1448A / Race 6) (Pseudomonas syringae pv. phaseolicola (strain 1448A / Race 6)).